We begin with the raw amino-acid sequence, 481 residues long: Dihydrolipoyl dehydrogenase (481 aa).

FAD-binding positions include 34-42 (EREHMGGIC) and Lys-51. Cys-42 and Cys-47 form a disulfide bridge. Residues 195 to 199 (GSGAI), Glu-218, and 284 to 287 (AVGV) contribute to the NAD(+) site. The FAD site is built by Asp-326 and Ala-334. The active-site Proton acceptor is the His-460.

It belongs to the class-I pyridine nucleotide-disulfide oxidoreductase family. As to quaternary structure, homodimer. It depends on FAD as a cofactor.

The protein localises to the cytoplasm. It catalyses the reaction N(6)-[(R)-dihydrolipoyl]-L-lysyl-[protein] + NAD(+) = N(6)-[(R)-lipoyl]-L-lysyl-[protein] + NADH + H(+). Its function is as follows. Lipoamide dehydrogenase is a component of the alpha-ketoacid dehydrogenase complexes. This is Dihydrolipoyl dehydrogenase (lpdA) from Rhizobium etli (strain ATCC 51251 / DSM 11541 / JCM 21823 / NBRC 15573 / CFN 42).